Consider the following 405-residue polypeptide: Glucose-1-phosphate adenylyltransferase 1 (405 aa).

Alpha-D-glucose 1-phosphate contacts are provided by residues Y96, G161, E176–K177, and S194.

The protein belongs to the bacterial/plant glucose-1-phosphate adenylyltransferase family. Homotetramer.

The enzyme catalyses alpha-D-glucose 1-phosphate + ATP + H(+) = ADP-alpha-D-glucose + diphosphate. The protein operates within glycan biosynthesis; glycogen biosynthesis. Functionally, involved in the biosynthesis of ADP-glucose, a building block required for the elongation reactions to produce glycogen. Catalyzes the reaction between ATP and alpha-D-glucose 1-phosphate (G1P) to produce pyrophosphate and ADP-Glc. This Vibrio parahaemolyticus serotype O3:K6 (strain RIMD 2210633) protein is Glucose-1-phosphate adenylyltransferase 1.